The primary structure comprises 465 residues: Coumaroyl-CoA:anthocyanidin 3-O-glucoside-6''-O-coumaroyltransferase 2 (465 aa).

M1 carries the N-acetylmethionine modification. Catalysis depends on proton acceptor residues H173 and D406.

This sequence belongs to the plant acyltransferase family. As to expression, highly expressed in flowers, and leaves. Lower levels of expression in stems, roots and siliques.

Functionally, involved in the acylation of the 6'' position of the 3-O-glucose residue of anthocyanin. Also able to use flavonol 3-glucosides as the acyl acceptor. The sequence is that of Coumaroyl-CoA:anthocyanidin 3-O-glucoside-6''-O-coumaroyltransferase 2 (3AT2) from Arabidopsis thaliana (Mouse-ear cress).